The following is a 493-amino-acid chain: Non-cyanogenic beta-glucosidase (493 aa).

Positions 1 to 18 (MDFIVAIFALFVISSFTI) are cleaved as a signal peptide. The N-linked (GlcNAc...) asparagine glycan is linked to Asn34. A beta-D-glucoside contacts are provided by residues Gln54, His158, and 203 to 204 (NE). Residue Glu204 is the Proton donor of the active site. Residue Asn335 is glycosylated (N-linked (GlcNAc...) asparagine). Tyr346 contributes to the a beta-D-glucoside binding site. Asn371 and Asn412 each carry an N-linked (GlcNAc...) asparagine glycan. A beta-D-glucoside contacts are provided by residues Glu422, Trp471, 478–479 (EW), and Phe487. The active-site Nucleophile is Glu422.

The protein belongs to the glycosyl hydrolase 1 family. As to expression, leaves.

The enzyme catalyses Hydrolysis of terminal, non-reducing beta-D-glucosyl residues with release of beta-D-glucose.. This is Non-cyanogenic beta-glucosidase from Trifolium repens (Creeping white clover).